Here is a 124-residue protein sequence, read N- to C-terminus: UPF0102 protein Meso_4010 (124 aa).

It belongs to the UPF0102 family.

The polypeptide is UPF0102 protein Meso_4010 (Chelativorans sp. (strain BNC1)).